Consider the following 130-residue polypeptide: Small ribosomal subunit protein uS9 (130 aa).

This sequence belongs to the universal ribosomal protein uS9 family.

The sequence is that of Small ribosomal subunit protein uS9 from Paraburkholderia phytofirmans (strain DSM 17436 / LMG 22146 / PsJN) (Burkholderia phytofirmans).